The chain runs to 331 residues: Glycerol-3-phosphate dehydrogenase [NAD(P)+] (331 aa).

Residues tryptophan 14, arginine 34, and lysine 107 each contribute to the NADPH site. Sn-glycerol 3-phosphate is bound by residues lysine 107, glycine 135, and serine 137. Alanine 139 provides a ligand contact to NADPH. Residues lysine 190, aspartate 243, serine 253, arginine 254, and asparagine 255 each contribute to the sn-glycerol 3-phosphate site. Catalysis depends on lysine 190, which acts as the Proton acceptor. Arginine 254 lines the NADPH pocket. Residues valine 278 and glutamate 280 each coordinate NADPH.

This sequence belongs to the NAD-dependent glycerol-3-phosphate dehydrogenase family.

Its subcellular location is the cytoplasm. It catalyses the reaction sn-glycerol 3-phosphate + NAD(+) = dihydroxyacetone phosphate + NADH + H(+). The catalysed reaction is sn-glycerol 3-phosphate + NADP(+) = dihydroxyacetone phosphate + NADPH + H(+). It functions in the pathway membrane lipid metabolism; glycerophospholipid metabolism. In terms of biological role, catalyzes the reduction of the glycolytic intermediate dihydroxyacetone phosphate (DHAP) to sn-glycerol 3-phosphate (G3P), the key precursor for phospholipid synthesis. The sequence is that of Glycerol-3-phosphate dehydrogenase [NAD(P)+] from Caulobacter vibrioides (strain ATCC 19089 / CIP 103742 / CB 15) (Caulobacter crescentus).